A 204-amino-acid chain; its full sequence is High frequency lysogenization protein HflD homolog (204 aa).

This sequence belongs to the HflD family.

The protein resides in the cytoplasm. Its subcellular location is the cell inner membrane. The polypeptide is High frequency lysogenization protein HflD homolog (Xanthomonas campestris pv. campestris (strain ATCC 33913 / DSM 3586 / NCPPB 528 / LMG 568 / P 25)).